The chain runs to 860 residues: Leucine--tRNA ligase (860 aa).

Positions 42 to 52 (PYPSGRLHMGH) match the 'HIGH' region motif. A 'KMSKS' region motif is present at residues 619 to 623 (KMSKS). Position 622 (Lys622) interacts with ATP.

The protein belongs to the class-I aminoacyl-tRNA synthetase family.

The protein localises to the cytoplasm. It catalyses the reaction tRNA(Leu) + L-leucine + ATP = L-leucyl-tRNA(Leu) + AMP + diphosphate. The polypeptide is Leucine--tRNA ligase (Yersinia pestis bv. Antiqua (strain Angola)).